A 404-amino-acid polypeptide reads, in one-letter code: 26S proteasome regulatory subunit 6A-B (404 aa).

192–199 (GPPGTGKT) serves as a coordination point for ATP.

It belongs to the AAA ATPase family. In terms of assembly, may form a heterodimer with a related family member.

The protein localises to the cytoplasm. It is found in the nucleus. Its function is as follows. The 26S proteasome is involved in the ATP-dependent degradation of ubiquitinated proteins. The regulatory (or ATPase) complex confers ATP dependency and substrate specificity to the 26S complex. This chain is 26S proteasome regulatory subunit 6A-B (psmc3-b), found in Xenopus laevis (African clawed frog).